The primary structure comprises 130 residues: NADH-quinone oxidoreductase subunit A (130 aa).

3 consecutive transmembrane segments (helical) span residues Y17–L37, L74–V94, and L99–V119.

It belongs to the complex I subunit 3 family. NDH-1 is composed of 14 different subunits. Subunits NuoA, H, J, K, L, M, N constitute the membrane sector of the complex.

The protein resides in the cell inner membrane. It catalyses the reaction a quinone + NADH + 5 H(+)(in) = a quinol + NAD(+) + 4 H(+)(out). In terms of biological role, NDH-1 shuttles electrons from NADH, via FMN and iron-sulfur (Fe-S) centers, to quinones in the respiratory chain. The immediate electron acceptor for the enzyme in this species is believed to be ubiquinone. Couples the redox reaction to proton translocation (for every two electrons transferred, four hydrogen ions are translocated across the cytoplasmic membrane), and thus conserves the redox energy in a proton gradient. This Neorickettsia sennetsu (strain ATCC VR-367 / Miyayama) (Ehrlichia sennetsu) protein is NADH-quinone oxidoreductase subunit A.